The chain runs to 151 residues: Large ribosomal subunit protein bL17 (151 aa).

The disordered stretch occupies residues 118–151 (EAKQPPRKEKAKKPAPVQAEEASATPASEEKAQD). The span at 131–144 (PAPVQAEEASATPA) shows a compositional bias: low complexity.

The protein belongs to the bacterial ribosomal protein bL17 family. As to quaternary structure, part of the 50S ribosomal subunit. Contacts protein L32.

The sequence is that of Large ribosomal subunit protein bL17 from Syntrophobacter fumaroxidans (strain DSM 10017 / MPOB).